The chain runs to 593 residues: Lipolysis-stimulated lipoprotein receptor (593 aa).

The signal sequence occupies residues 1–35 (MAPAAGACAGAPDSHPATVVFVCLFLIIFCPDPAS). Topologically, residues 36 to 206 (AIQVTVSDPY…PGFRAGPLED (171 aa)) are extracellular. The 93-residue stretch at 89–181 (PASVDNQLNA…DLDGNNEAYA (93 aa)) folds into the Ig-like V-type domain. The cysteines at positions 113 and 165 are disulfide-linked. Residues 207 to 227 (WLFVVVVCLASLLLFLLLGIC) traverse the membrane as a helical segment. Topologically, residues 228–593 (WCQCCPHTCC…LALSRESLVV (366 aa)) are cytoplasmic. T283 carries the post-translational modification Phosphothreonine. A phosphoserine mark is found at S308, S314, S332, S375, and S379. Residues 375-387 (SEVTSLHEDDWRS) show a composition bias toward basic and acidic residues. A disordered region spans residues 375–578 (SEVTSLHEDD…ETDSQASRER (204 aa)). T396 bears the Phosphothreonine mark. Residues S407, S410, and S436 each carry the phosphoserine modification. The span at 435 to 444 (RSVDALDDIN) shows a compositional bias: basic and acidic residues. The span at 445–460 (RPGSTESGRSSPPSSG) shows a compositional bias: low complexity. Phosphoserine occurs at positions 471 and 473. A compositionally biased stretch (basic and acidic residues) spans 472-550 (RSRDDLYDPD…GSGERRRVYR (79 aa)). The residue at position 478 (Y478) is a Phosphotyrosine. S575 carries the phosphoserine modification. K582 is covalently cross-linked (Glycyl lysine isopeptide (Lys-Gly) (interchain with G-Cter in ubiquitin)). Phosphoserine is present on residues S587 and S590.

Belongs to the immunoglobulin superfamily. LISCH7 family. As to quaternary structure, homotrimer or homotetramer constituted of isoform 1 and/or isoform 2 and isoform 3. Assembles into cell-cell contacts. Interacts (via the cytoplasmic domain) with MARVELD2 (via C-terminal cytoplasmic domain); the interaction is required to recruit MARVELD2 to tricellular contacts. Interacts with OCLN. In terms of processing, phosphorylation at Ser-308 by MAPK8/JNK1 and MAPK9/JNK2 may be required for exclusive localization at tricellular tight junstions. Post-translationally, polyubiquitinated at Lys-582 via 'Lys-63'-linked ubiquitin chains; deubiquitinated by USP53. Specifically expressed in liver. Also detected in kidney and lung.

It is found in the cell membrane. It localises to the cell junction. The protein resides in the tight junction. Functionally, probable role in the clearance of triglyceride-rich lipoprotein from blood. Binds chylomicrons, LDL and VLDL in presence of free fatty acids and allows their subsequent uptake in the cells. Maintains epithelial barrier function by recruiting MARVELD2/tricellulin to tricellular tight junctions. This chain is Lipolysis-stimulated lipoprotein receptor, found in Rattus norvegicus (Rat).